We begin with the raw amino-acid sequence, 689 residues long: Glycine--tRNA ligase beta subunit (689 aa).

This sequence belongs to the class-II aminoacyl-tRNA synthetase family. Tetramer of two alpha and two beta subunits.

The protein localises to the cytoplasm. It catalyses the reaction tRNA(Gly) + glycine + ATP = glycyl-tRNA(Gly) + AMP + diphosphate. The chain is Glycine--tRNA ligase beta subunit from Shewanella halifaxensis (strain HAW-EB4).